Here is a 119-residue protein sequence, read N- to C-terminus: Small ribosomal subunit protein uS13m (119 aa).

The protein belongs to the universal ribosomal protein uS13 family. As to quaternary structure, component of the mitochondrial small ribosomal subunit (mt-SSU). Mature N.crassa 74S mitochondrial ribosomes consist of a small (37S) and a large (54S) subunit. The 37S small subunit contains a 16S ribosomal RNA (16S mt-rRNA) and 32 different proteins. The 54S large subunit contains a 23S rRNA (23S mt-rRNA) and 42 different proteins.

It is found in the mitochondrion. Functionally, component of the mitochondrial ribosome (mitoribosome), a dedicated translation machinery responsible for the synthesis of mitochondrial genome-encoded proteins, including at least some of the essential transmembrane subunits of the mitochondrial respiratory chain. The mitoribosomes are attached to the mitochondrial inner membrane and translation products are cotranslationally integrated into the membrane. The chain is Small ribosomal subunit protein uS13m (sws2) from Neurospora crassa (strain ATCC 24698 / 74-OR23-1A / CBS 708.71 / DSM 1257 / FGSC 987).